The sequence spans 814 residues: G-type lectin S-receptor-like serine/threonine-protein kinase At1g61400 (814 aa).

A signal peptide spans 1–34 (MDFLFLLLERKNKHMGKKRVVLLWLSIFISFSSA). In terms of domain architecture, Bulb-type lectin spans 35 to 154 (EITEESPLSI…VSGRTLWESF (120 aa)). Residues 35–436 (EITEESPLSI…ELDVNKRKKT (402 aa)) are Extracellular-facing. Residues Asn-63, Asn-104, Asn-127, and Asn-246 are each glycosylated (N-linked (GlcNAc...) asparagine). Residues 288–324 (PANSCDIYGVCGPFGFCVISVPPKCKCFKGFIPKSIE) form the EGF-like; atypical domain. Disulfide bonds link Cys-292/Cys-304 and Cys-298/Cys-312. 3 N-linked (GlcNAc...) asparagine glycosylation sites follow: Asn-330, Asn-346, and Asn-385. Residues 343–425 (CQGNSTGKDA…GELLSIRLAR (83 aa)) form the PAN domain. 2 disulfides stabilise this stretch: Cys-378/Cys-399 and Cys-382/Cys-388. Residues 437 to 457 (IIAITVSLTLFVILGFTAFGF) traverse the membrane as a helical segment. At 458-814 (WRRRVEQNAL…EMTESVIHGR (357 aa)) the chain is on the cytoplasmic side. One can recognise a Protein kinase domain in the interval 500–785 (FSLSNKLGHG…DLPLPKQPTF (286 aa)). Residues 506 to 514 (LGHGGFGSV) and Lys-528 contribute to the ATP site. A phosphoserine mark is found at Ser-534 and Ser-549. The interval 589–606 (KKRLEIDWPKRFDIIQGI) is caM-binding. Residue Asp-625 is the Proton acceptor of the active site. Phosphoserine is present on residues Ser-629 and Ser-642. The residue at position 659 (Thr-659) is a Phosphothreonine. A phosphoserine mark is found at Ser-702 and Ser-796.

Belongs to the protein kinase superfamily. Ser/Thr protein kinase family.

Its subcellular location is the cell membrane. It carries out the reaction L-seryl-[protein] + ATP = O-phospho-L-seryl-[protein] + ADP + H(+). The catalysed reaction is L-threonyl-[protein] + ATP = O-phospho-L-threonyl-[protein] + ADP + H(+). The polypeptide is G-type lectin S-receptor-like serine/threonine-protein kinase At1g61400 (Arabidopsis thaliana (Mouse-ear cress)).